The sequence spans 180 residues: Adenine phosphoribosyltransferase (180 aa).

The protein belongs to the purine/pyrimidine phosphoribosyltransferase family. Homodimer.

The protein resides in the cytoplasm. It carries out the reaction AMP + diphosphate = 5-phospho-alpha-D-ribose 1-diphosphate + adenine. The protein operates within purine metabolism; AMP biosynthesis via salvage pathway; AMP from adenine: step 1/1. Functionally, catalyzes a salvage reaction resulting in the formation of AMP, that is energically less costly than de novo synthesis. In Pasteurella multocida (strain Pm70), this protein is Adenine phosphoribosyltransferase.